The primary structure comprises 292 residues: Elongation factor Ts (292 aa).

The segment at 82 to 85 is involved in Mg(2+) ion dislocation from EF-Tu; it reads TDFV.

This sequence belongs to the EF-Ts family.

It localises to the cytoplasm. Functionally, associates with the EF-Tu.GDP complex and induces the exchange of GDP to GTP. It remains bound to the aminoacyl-tRNA.EF-Tu.GTP complex up to the GTP hydrolysis stage on the ribosome. This chain is Elongation factor Ts, found in Bordetella parapertussis (strain 12822 / ATCC BAA-587 / NCTC 13253).